A 326-amino-acid chain; its full sequence is GATA zinc finger domain-containing protein 21 (326 aa).

Disordered stretches follow at residues 1-102 (MFRN…NNNN) and 145-238 (QNQS…TPER). 2 stretches are compositionally biased toward low complexity: residues 17–102 (NTNL…NNNN) and 148–164 (SSSS…GSSA). Residues 165–189 (LNSINNNNYSPTTSSLNRVRNQYNQ) are compositionally biased toward polar residues. Residues 193 to 218 (DEEDDDYDNGAEDGFDYDGDDNEDGS) show a composition bias toward acidic residues. The GATA-type zinc-finger motif lies at 239-266 (CSNCKITHSSYWRRITVNGQKLDFCNAC). The disordered stretch occupies residues 277–326 (IKESKQRHSIQNIMNQNQEEEEEEREEEEEEEEEEDEEFETLEEEEEDDE). Over residues 294-326 (QEEEEEEREEEEEEEEEEDEEFETLEEEEEDDE) the composition is skewed to acidic residues.

The sequence is that of GATA zinc finger domain-containing protein 21 (gtaU) from Dictyostelium discoideum (Social amoeba).